A 179-amino-acid polypeptide reads, in one-letter code: Ribulose bisphosphate carboxylase small subunit, chloroplastic 2 (179 aa).

Residues 1 to 58 (MASSATMLSSVATAACVAPAQASMVAPFVGLKSASAFPVTQKTVTGLSTLPSNGGRVQ) constitute a chloroplast transit peptide.

Belongs to the RuBisCO small chain family. As to quaternary structure, heterohexadecamer of 8 large and 8 small subunits.

Its subcellular location is the plastid. It is found in the chloroplast. In terms of biological role, ruBisCO catalyzes two reactions: the carboxylation of D-ribulose 1,5-bisphosphate, the primary event in carbon dioxide fixation, as well as the oxidative fragmentation of the pentose substrate. Both reactions occur simultaneously and in competition at the same active site. Although the small subunit is not catalytic it is essential for maximal activity. The protein is Ribulose bisphosphate carboxylase small subunit, chloroplastic 2 of Fritillaria agrestis (Stinkbells).